We begin with the raw amino-acid sequence, 460 residues long: Phosphoenolpyruvate carboxylase (460 aa).

It belongs to the PEPCase type 2 family. Homotetramer. Requires Mg(2+) as cofactor.

The catalysed reaction is oxaloacetate + phosphate = phosphoenolpyruvate + hydrogencarbonate. Its function is as follows. Catalyzes the irreversible beta-carboxylation of phosphoenolpyruvate (PEP) to form oxaloacetate (OAA), a four-carbon dicarboxylic acid source for the tricarboxylic acid cycle. The polypeptide is Phosphoenolpyruvate carboxylase (Pyrobaculum aerophilum (strain ATCC 51768 / DSM 7523 / JCM 9630 / CIP 104966 / NBRC 100827 / IM2)).